A 48-amino-acid polypeptide reads, in one-letter code: Delta-stichotoxin-Hmg4b (48 aa).

Intrachain disulfides connect C3/C43, C5/C33, and C26/C44.

Belongs to the sea anemone sodium channel inhibitory toxin family. Type II subfamily.

The protein localises to the secreted. It is found in the nematocyst. In terms of biological role, binds specifically to voltage-gated sodium channels (Nav), thereby delaying their inactivation during signal transduction. Its toxicity is greater than that of RpII (AC P01534). In Heteractis magnifica (Magnificent sea anemone), this protein is Delta-stichotoxin-Hmg4b.